A 503-amino-acid chain; its full sequence is AMP phosphorylase (503 aa).

AMP is bound by residues Gly-168, 194–199 (SRAITS), and Thr-203. The active-site Proton donor is the Asp-256. 2 residues coordinate AMP: Ser-264 and Lys-288.

The protein belongs to the thymidine/pyrimidine-nucleoside phosphorylase family. Type 2 subfamily.

The catalysed reaction is AMP + phosphate = alpha-D-ribose 1,5-bisphosphate + adenine. It carries out the reaction CMP + phosphate = cytosine + alpha-D-ribose 1,5-bisphosphate. It catalyses the reaction UMP + phosphate = alpha-D-ribose 1,5-bisphosphate + uracil. Its function is as follows. Catalyzes the conversion of AMP and phosphate to adenine and ribose 1,5-bisphosphate (R15P). Exhibits phosphorylase activity toward CMP and UMP in addition to AMP. Functions in an archaeal AMP degradation pathway, together with R15P isomerase and RubisCO. The sequence is that of AMP phosphorylase (deoA) from Pyrococcus abyssi (strain GE5 / Orsay).